We begin with the raw amino-acid sequence, 352 residues long: Zinc finger CCCH domain-containing protein 42 (352 aa).

The RRM domain maps to 36–114; it reads AYVYVGGIPF…RTIKVDHCGA (79 aa). 2 consecutive C3H1-type zinc fingers follow at residues 130–157 and 180–207; these read REAR…HDEK and REGR…HDEK. Residues 156-179 form a disordered region; it reads EKRAANTGWGHEEDRSSKWDHDKN. 3 stretches are compositionally biased toward basic and acidic residues: residues 210–230, 243–296, and 304–352; these read ATTG…DKLN, GDFK…RSGR, and RHND…DRRR. Residues 210–352 are disordered; sequence ATTGWGHEED…DSLRREDRRR (143 aa). Positions 319–348 form a coiled coil; that stretch reads RAQDWEKRKAESRRDRNDREEKDRDSLRRE.

The polypeptide is Zinc finger CCCH domain-containing protein 42 (Arabidopsis thaliana (Mouse-ear cress)).